A 293-amino-acid polypeptide reads, in one-letter code: MEPASLENLSVLYQSTNYIVVNKHWDIRIDSKMWYEKQTVQSQLKHHFPELADPGTYYGFRFCHQLDFSTSGALCVALNKAAAGQAYRCFKDRRVTKAYLALVRGTVTEENLSLDFAIGKNTTEGKTHMMCTEGTEGCENPKPCQTEVTVLEYGTYDGDQVTKVLLQPLTGRTHQLRVHCSAIGHPIVGDYTYSLRTDNSPYRMMLHAYFLHIPLHNEPIHVTAPDPFVPSLDAKWAPLRCVNILEDLLKNILTKLQAAMQEEAEPEPRTSSPVESEEQRAQCQQWLCEWSLE.

Residue D67 is part of the active site.

This sequence belongs to the pseudouridine synthase RluA family.

In Danio rerio (Zebrafish), this protein is RNA pseudouridylate synthase domain-containing protein 1 (rpusd1).